The primary structure comprises 554 residues: Outer envelope protein 61 (554 aa).

At 1-525 the chain is on the cytoplasmic side; that stretch reads MFNGLMDPEM…GMEKAKKAKK (525 aa). 2 TPR repeats span residues 103–136 and 180–213; these read AQML…LKEI and VKAL…SPED. Disordered regions lie at residues 245 to 269 and 395 to 439; these read TEEN…AQGV and APAS…PSAP. Basic and acidic residues predominate over residues 254-263; that stretch reads ENKKPSKEAN. A compositionally biased stretch (low complexity) spans 412 to 423; sequence SLGASGSSSGNS. Residues 526-546 traverse the membrane as a helical segment; that stretch reads WLFGKGGLIFAILMLVLAMVL. The Lumenal segment spans residues 547–554; that stretch reads HRLGYIGN.

Interacts (via TPR region) with HSP70-1, but not with HSP90-2. Interacts with ERDJ2A and ERDJ2B. In the ER membrane, associates with ERDJ2 in membrane complexes of 140 and 200 kDa and specifically interacts with the HSP70 and HSP90 chaperones via its TPR domain. Ubiquitous. Highest expression in leaves and lowest in roots.

The protein localises to the endoplasmic reticulum membrane. It is found in the plastid. It localises to the chloroplast outer membrane. Functionally, plays a role in protein import into the endoplasmic reticulum (ER). May function as chaperone docking protein during post-translational protein translocation into the ER. Chaperone receptor mediating Hsp70-dependent protein targeting to chloroplasts. Interacts specifically with some chloroplast precursors, but not with mitochondrial precursors. Able to select precursors for delivery to the chloroplast translocase independently of Hsp70. The protein is Outer envelope protein 61 (OEP61) of Arabidopsis thaliana (Mouse-ear cress).